The chain runs to 121 residues: Cell division protein FtsB (121 aa).

At 1–6 the chain is on the cytoplasmic side; it reads MRNWRW. A helical membrane pass occupies residues 7 to 24; it reads LLLVLAVLLAWLQYRFWF. Residues 25 to 121 lie on the Periplasmic side of the membrane; it reads GPGNSGEVMM…PEPVDPVDHP (97 aa). Positions 31–66 form a coiled coil; sequence EVMMLEAQVAHQTQDNEGLRQRNQALAAEVKDLKDG. Residues 98-121 are disordered; that stretch reads APASAEASAPAQQAPEPVDPVDHP. Low complexity predominate over residues 99–113; sequence PASAEASAPAQQAPE.

It belongs to the FtsB family. In terms of assembly, part of a complex composed of FtsB, FtsL and FtsQ.

The protein localises to the cell inner membrane. In terms of biological role, essential cell division protein. May link together the upstream cell division proteins, which are predominantly cytoplasmic, with the downstream cell division proteins, which are predominantly periplasmic. This chain is Cell division protein FtsB, found in Xanthomonas axonopodis pv. citri (strain 306).